A 306-amino-acid chain; its full sequence is Porphobilinogen deaminase (306 aa).

Cysteine 239 is subject to S-(dipyrrolylmethanemethyl)cysteine.

The protein belongs to the HMBS family. As to quaternary structure, monomer. It depends on dipyrromethane as a cofactor.

It carries out the reaction 4 porphobilinogen + H2O = hydroxymethylbilane + 4 NH4(+). It functions in the pathway porphyrin-containing compound metabolism; protoporphyrin-IX biosynthesis; coproporphyrinogen-III from 5-aminolevulinate: step 2/4. Tetrapolymerization of the monopyrrole PBG into the hydroxymethylbilane pre-uroporphyrinogen in several discrete steps. The polypeptide is Porphobilinogen deaminase (Helicobacter pylori (strain HPAG1)).